Reading from the N-terminus, the 315-residue chain is Aspartate carbamoyltransferase catalytic subunit (315 aa).

Residues Arg61 and Thr62 each contribute to the carbamoyl phosphate site. Lys90 contacts L-aspartate. Positions 111, 139, and 142 each coordinate carbamoyl phosphate. L-aspartate-binding residues include Arg172 and Arg234. Leu274 and Pro275 together coordinate carbamoyl phosphate.

Belongs to the aspartate/ornithine carbamoyltransferase superfamily. ATCase family. As to quaternary structure, heterooligomer of catalytic and regulatory chains.

The catalysed reaction is carbamoyl phosphate + L-aspartate = N-carbamoyl-L-aspartate + phosphate + H(+). It participates in pyrimidine metabolism; UMP biosynthesis via de novo pathway; (S)-dihydroorotate from bicarbonate: step 2/3. Its function is as follows. Catalyzes the condensation of carbamoyl phosphate and aspartate to form carbamoyl aspartate and inorganic phosphate, the committed step in the de novo pyrimidine nucleotide biosynthesis pathway. The polypeptide is Aspartate carbamoyltransferase catalytic subunit (Hyperthermus butylicus (strain DSM 5456 / JCM 9403 / PLM1-5)).